A 655-amino-acid polypeptide reads, in one-letter code: p-hydroxybenzoic acid efflux pump subunit AaeB (655 aa).

Residues 1–12 (MGIFSIANQHIR) lie on the Periplasmic side of the membrane. The helical transmembrane segment at 13-33 (FAVKLATAIVLALFVGFHFQL) threads the bilayer. Topologically, residues 34-37 (ETPR) are cytoplasmic. Residues 38-58 (WAVLTAAIVAAGPAFAAGGEP) traverse the membrane as a helical segment. Topologically, residues 59-68 (YSGAIRYRGF) are periplasmic. The helical transmembrane segment at 69-89 (LRIIGTFIGCIAGLVIIIAMI) threads the bilayer. The Cytoplasmic segment spans residues 90–92 (RAP). The chain crosses the membrane as a helical span at residues 93 to 113 (LLMILVCCIWAGFCTWISSLV). At 114 to 120 (RIENSYA) the chain is on the periplasmic side. A helical transmembrane segment spans residues 121 to 141 (WGLAGYTALIIVITIQPEPLL). Topologically, residues 142–151 (TPQFAVERCS) are cytoplasmic. Residues 152–172 (EIVIGIVCAIMADLLFSPRSI) traverse the membrane as a helical segment. Topologically, residues 173–369 (KQEVDRELES…RTTLSCILGT (197 aa)) are periplasmic. The chain crosses the membrane as a helical span at residues 370-390 (LFWLWTGWTSGSGAMVMIAVV). Over 391-406 (TSLAMRLPNPRMVAID) the chain is Cytoplasmic. The chain crosses the membrane as a helical span at residues 407–427 (FIYGTLAALPLGLLYFLVIIP). Topologically, residues 428-430 (NTQ) are periplasmic. Residues 431-451 (QSMLLLCISLAVLGFFLGIEV) form a helical membrane-spanning segment. The Cytoplasmic portion of the chain corresponds to 452-458 (QKRRLGS). Residues 459–479 (MGALASTINIIVLDNPMTFHF) form a helical membrane-spanning segment. Over 480–481 (SQ) the chain is Periplasmic. A helical transmembrane segment spans residues 482-502 (FLDSALGQIVGCVLAFTVILL). Residues 503 to 655 (VRDKSRDRTG…HKYQHALTDS (153 aa)) are Cytoplasmic-facing.

This sequence belongs to the aromatic acid exporter ArAE (TC 2.A.85) family.

It localises to the cell inner membrane. Its function is as follows. Forms an efflux pump with AaeA. Could function as a metabolic relief valve, allowing to eliminate certain compounds when they accumulate to high levels in the cell. This Escherichia coli O6:H1 (strain CFT073 / ATCC 700928 / UPEC) protein is p-hydroxybenzoic acid efflux pump subunit AaeB.